The following is a 551-amino-acid chain: Endolytic murein transglycosylase (551 aa).

Residues 1-187 are Cytoplasmic-facing; the sequence is MSEKSREEEK…PKKEKKSHVK (187 aa). A disordered region spans residues 38 to 180; it reads VRTPANEPSA…EGAKPAKPKK (143 aa). Composition is skewed to low complexity over residues 100 to 110 and 145 to 157; these read PSSPAEESGSR and QAGP…ATET. Over residues 159 to 174 the composition is skewed to basic and acidic residues; it reads DIIRDTSRRSRREGAK. Residues 188-208 form a helical membrane-spanning segment; sequence AFVISFLVFLALLSAGGYFGY. Residues 209–551 lie on the Extracellular side of the membrane; that stretch reads QYVLDSLLPI…VAEHVNSKLN (343 aa).

It belongs to the transglycosylase MltG family.

It is found in the cell membrane. The enzyme catalyses a peptidoglycan chain = a peptidoglycan chain with N-acetyl-1,6-anhydromuramyl-[peptide] at the reducing end + a peptidoglycan chain with N-acetylglucosamine at the non-reducing end.. Functions as a peptidoglycan terminase that cleaves nascent peptidoglycan strands endolytically to terminate their elongation. Involved in peripheral peptidoglycan (PG) synthesis. This chain is Endolytic murein transglycosylase, found in Streptococcus pneumoniae serotype 2 (strain D39 / NCTC 7466).